The primary structure comprises 385 residues: Galactokinase (385 aa).

Position 34–37 (34–37 (EHTD)) interacts with substrate. Residue 124-130 (SSGLSSS) participates in ATP binding. 2 residues coordinate Mg(2+): S130 and E162. D174 (proton acceptor) is an active-site residue. Y223 is a substrate binding site.

The protein belongs to the GHMP kinase family. GalK subfamily.

Its subcellular location is the cytoplasm. It carries out the reaction alpha-D-galactose + ATP = alpha-D-galactose 1-phosphate + ADP + H(+). It functions in the pathway carbohydrate metabolism; galactose metabolism. In terms of biological role, catalyzes the transfer of the gamma-phosphate of ATP to D-galactose to form alpha-D-galactose-1-phosphate (Gal-1-P). The sequence is that of Galactokinase from Mannheimia succiniciproducens (strain KCTC 0769BP / MBEL55E).